The following is a 249-amino-acid chain: Putative adhesin RC1281 (249 aa).

The first 22 residues, 1–22, serve as a signal peptide directing secretion; the sequence is MKKLLLIAAASTALLTSGLSFA.

Functionally, adheres to biotinylated epithelial (Vero cell) proteins. The chain is Putative adhesin RC1281 from Rickettsia conorii (strain ATCC VR-613 / Malish 7).